A 221-amino-acid polypeptide reads, in one-letter code: MRSQLSLIGKKEGMMHVFDKNGNLVACSVISVDANVVAQLKTASSDGYNAVQMGADVVQAPEKTIEKRFSKALLGHFKKSGGRVCRVLKEVVVSEEAVQSVSLGDEFGLEIFDGVSNVDICGISKGKGFQGVMKKFGFRGGPKSHGSGFHRHAGSTGMRSTPGRCFPGSKRPSHMGCDRVTVKNLEVVKVDLDRKVMLVKGAIPGFKGSVVVVKRSCGVEG.

The protein belongs to the universal ribosomal protein uL3 family. As to quaternary structure, part of the 50S ribosomal subunit. Forms a cluster with proteins L14 and L19.

One of the primary rRNA binding proteins, it binds directly near the 3'-end of the 23S rRNA, where it nucleates assembly of the 50S subunit. This Chlamydia trachomatis serovar A (strain ATCC VR-571B / DSM 19440 / HAR-13) protein is Large ribosomal subunit protein uL3.